The following is a 90-amino-acid chain: Envelope glycoprotein N (90 aa).

A signal peptide spans 1–21; it reads MTWKLFICFLSFGVIFLRVSS. Residues 22-55 lie on the Virion surface side of the membrane; the sequence is LTEKSHTTSYTILHNNNFYSNSCSADTYVPSIKT. Residues 56-76 form a helical membrane-spanning segment; the sequence is FSSVWAILNVIIFFCASLFYL. At 77–90 the chain is on the intravirion side; it reads RHLCIVKFISNLTK.

This sequence belongs to the herpesviridae glycoprotein N family. In terms of assembly, interacts (via N-terminus) with gM (via N-terminus). The gM-gN heterodimer forms the gCII complex.

It is found in the virion membrane. Its subcellular location is the host membrane. It localises to the host Golgi apparatus. The protein resides in the host trans-Golgi network. In terms of biological role, envelope glycoprotein necessary for proper maturation of gM and modulation of its membrane fusion activity. Also plays a critical role in virion morphogenesis. The polypeptide is Envelope glycoprotein N (Saimiriine herpesvirus 2 (strain 11) (SaHV-2)).